A 1165-amino-acid chain; its full sequence is Linoleate diol synthase (1165 aa).

The interval 104–448 (TDGLINDLWD…DGAFDDTELV (345 aa)) is fatty acid alpha-dioxygenase. Histidine 203 serves as a coordination point for heme b. Residues aspartate 204, serine 219, tyrosine 221, aspartate 223, and serine 225 each contribute to the Ca(2+) site. Residue tyrosine 376 is part of the active site. Position 379 (histidine 379) interacts with heme b. Residues 666–1161 (EVLSNQKDYK…ATTMKINWEG (496 aa)) are epoxy alcohol synthase. Residue cysteine 1080 participates in heme binding. Residues 1114-1134 (RSYPASQWPGQAGRPPRDPAW) are disordered.

It belongs to the peroxidase family. As to quaternary structure, homotetramer. Heme b is required as a cofactor. It depends on Ca(2+) as a cofactor. Heme serves as cofactor. In terms of processing, the N-terminus is blocked.

It carries out the reaction (9Z,12Z)-octadecadienoate + O2 = (8R,9Z,12Z)-8-hydroperoxyoctadeca-9,12-dienoate. The enzyme catalyses (8R,9Z,12Z)-8-hydroperoxyoctadeca-9,12-dienoate = (7S,8S,9Z,12Z)-7,8-dihydroxyoctadeca-9,12-dienoate. In terms of biological role, 7,8-linoleate diol synthase is a bifunctional enzyme that converts linoleic acid (18:2n-6) into 8-hydroperoxy-8(E),12(Z)-octadecadienoic acid (8-HPODE) and then catalyzes the isomerization of the resulting hydroperoxide to 7,8-dihydroxy-9(Z),12(Z)-octadecadienoic acid (7,8-DiHODE). The sequence is that of Linoleate diol synthase from Gaeumannomyces graminis (Turf grass take-all root rot fungus).